Consider the following 179-residue polypeptide: Cell division protein SepF (179 aa).

Positions 22 to 55 (LPYEKRDEPVFTSVNSSQEPALPMNQPSQSAGTK) are disordered. Residues 33 to 55 (TSVNSSQEPALPMNQPSQSAGTK) show a composition bias toward polar residues.

This sequence belongs to the SepF family. Homodimer. Interacts with FtsZ.

The protein localises to the cytoplasm. In terms of biological role, cell division protein that is part of the divisome complex and is recruited early to the Z-ring. Probably stimulates Z-ring formation, perhaps through the cross-linking of FtsZ protofilaments. Its function overlaps with FtsA. The polypeptide is Cell division protein SepF (Streptococcus pneumoniae (strain Taiwan19F-14)).